Consider the following 395-residue polypeptide: Elongation factor Tu (395 aa).

One can recognise a tr-type G domain in the interval 10 to 204 (KPHVNIGTIG…AVDEYIPTPQ (195 aa)). Residues 19–26 (GHVDHGKT) are G1. A GTP-binding site is contributed by 19–26 (GHVDHGKT). A Mg(2+)-binding site is contributed by T26. The G2 stretch occupies residues 60-64 (GITIS). The tract at residues 81-84 (DCPG) is G3. GTP contacts are provided by residues 81–85 (DCPGH) and 136–139 (NKCD). Residues 136 to 139 (NKCD) are G4. A G5 region spans residues 174–176 (SAL).

It belongs to the TRAFAC class translation factor GTPase superfamily. Classic translation factor GTPase family. EF-Tu/EF-1A subfamily. Monomer.

The protein resides in the cytoplasm. It carries out the reaction GTP + H2O = GDP + phosphate + H(+). In terms of biological role, GTP hydrolase that promotes the GTP-dependent binding of aminoacyl-tRNA to the A-site of ribosomes during protein biosynthesis. This chain is Elongation factor Tu, found in Geobacillus sp. (strain WCH70).